Consider the following 345-residue polypeptide: Protein RecA (345 aa).

65-72 (GPESSGKT) contributes to the ATP binding site.

Belongs to the RecA family.

It localises to the cytoplasm. Its function is as follows. Can catalyze the hydrolysis of ATP in the presence of single-stranded DNA, the ATP-dependent uptake of single-stranded DNA by duplex DNA, and the ATP-dependent hybridization of homologous single-stranded DNAs. It interacts with LexA causing its activation and leading to its autocatalytic cleavage. This Hahella chejuensis (strain KCTC 2396) protein is Protein RecA.